A 168-amino-acid chain; its full sequence is Small ribosomal subunit protein uS5 (168 aa).

In terms of domain architecture, S5 DRBM spans 11-74; that stretch reads YSEKVVKIDR…EAAKKHLVKI (64 aa).

It belongs to the universal ribosomal protein uS5 family. As to quaternary structure, part of the 30S ribosomal subunit. Contacts proteins S4 and S8.

Its function is as follows. With S4 and S12 plays an important role in translational accuracy. In terms of biological role, located at the back of the 30S subunit body where it stabilizes the conformation of the head with respect to the body. The sequence is that of Small ribosomal subunit protein uS5 from Leptospira borgpetersenii serovar Hardjo-bovis (strain JB197).